Reading from the N-terminus, the 276-residue chain is Streptothricin hydrolase (276 aa).

Cys176 (nucleophile) is an active-site residue. The disordered stretch occupies residues 250 to 276; sequence PEAPAAAAAPAAGTGLSPAGPPPAPAR. Over residues 252–267 the composition is skewed to low complexity; that stretch reads APAAAAAPAAGTGLSP.

It belongs to the isochorismatase family. As to quaternary structure, homodimer. Requires Does not require a metal cofactor. as cofactor.

The enzyme catalyses streptothricin F + H2O = streptothricin F acid. Its function is as follows. Catalyzes the hydrolysis of the amide bond of streptolidine lactam, thereby conferring streptothricin (ST) resistance. Can hydrolyze streptothricin-F and streptothricin-D. However, this strain is believed to be a ST nonproducer, which raises the possibility that its true role may not be its involvement in self-resistance to STs. May catalyze the hydrolysis of naturally occurring cyclic amide compounds that are structurally related to STs. This chain is Streptothricin hydrolase (sttH), found in Streptomyces noursei (Streptomyces albulus).